A 376-amino-acid polypeptide reads, in one-letter code: Heat-inducible transcription repressor HrcA (376 aa).

It belongs to the HrcA family.

Negative regulator of class I heat shock genes (grpE-dnaK-dnaJ and groELS operons). Prevents heat-shock induction of these operons. This chain is Heat-inducible transcription repressor HrcA, found in Chloroflexus aggregans (strain MD-66 / DSM 9485).